We begin with the raw amino-acid sequence, 315 residues long: NADH-cytochrome b5 reductase-like (315 aa).

The Oxidoreductase-like domain occupies 19–55 (RPTEPLPSQCCGSGCSPCVFDLYHRDLARWEAAQASK). One can recognise an FAD-binding FR-type domain in the interval 75 to 177 (ETFVAFCIIA…RGPFGDFFYK (103 aa)). Residues 157-172 (ESWR…GPFG) and 182-214 (GELL…TFVT) contribute to the FAD site.

This sequence belongs to the flavoprotein pyridine nucleotide cytochrome reductase family. It depends on FAD as a cofactor.

It catalyses the reaction 2 Fe(III)-[cytochrome b5] + NADH = 2 Fe(II)-[cytochrome b5] + NAD(+) + H(+). Its function is as follows. NADH-cytochrome b5 reductases are involved in desaturation and elongation of fatty acids, cholesterol biosynthesis, drug metabolism, and, in erythrocyte, methemoglobin reduction. This Homo sapiens (Human) protein is NADH-cytochrome b5 reductase-like (CYB5RL).